The sequence spans 447 residues: Phosphoglucosamine mutase (447 aa).

The active-site Phosphoserine intermediate is S100. Positions 100, 239, 241, and 243 each coordinate Mg(2+). S100 carries the post-translational modification Phosphoserine.

This sequence belongs to the phosphohexose mutase family. The cofactor is Mg(2+). Activated by phosphorylation.

It carries out the reaction alpha-D-glucosamine 1-phosphate = D-glucosamine 6-phosphate. Its function is as follows. Catalyzes the conversion of glucosamine-6-phosphate to glucosamine-1-phosphate. This is Phosphoglucosamine mutase from Dictyoglomus turgidum (strain DSM 6724 / Z-1310).